The following is a 260-amino-acid chain: Multiple myeloma tumor-associated protein 2 homolog (260 aa).

Residues 1 to 11 are compositionally biased toward gly residues; sequence MFGSNRGGVRG. The interval 1–21 is disordered; the sequence is MFGSNRGGVRGGQDQFNWEDV. Residues Lys-22, Lys-104, and Lys-113 each participate in a glycyl lysine isopeptide (Lys-Gly) (interchain with G-Cter in SUMO2) cross-link. Over residues 106 to 116 the composition is skewed to basic and acidic residues; the sequence is EGGDPEEKGVD. 2 disordered regions span residues 106–133 and 146–260; these read EGGDPEEKGVDRLLGLGSASGSAGRVAL and SVFT…SSDD. The span at 117-132 shows a compositional bias: low complexity; sequence RLLGLGSASGSAGRVA. Phosphoserine is present on residues Ser-123 and Ser-127. Residues 170-182 show a composition bias toward basic and acidic residues; the sequence is RAEDKVEPDAESH. The segment covering 183–206 has biased composition (basic residues); it reads KKSKKEKKKKKKKHKKHKKKKDKE. Phosphoserine occurs at positions 215, 216, and 219.

The chain is Multiple myeloma tumor-associated protein 2 homolog (Mmtag2) from Mus musculus (Mouse).